The sequence spans 72 residues: MLVLSRKKDQSLMIGNDIELTIIDIQGDQVKIGLKAPKNVSIYRKELYLEIQEENKKAATADVVELDSIFKK.

Belongs to the CsrA/RsmA family. Homodimer; the beta-strands of each monomer intercalate to form a hydrophobic core, while the alpha-helices form wings that extend away from the core.

It localises to the cytoplasm. A translational regulator that binds mRNA to regulate translation initiation and/or mRNA stability. Usually binds in the 5'-UTR at or near the Shine-Dalgarno sequence preventing ribosome-binding, thus repressing translation. Its main target seems to be the major flagellin gene, while its function is anatagonized by FliW. In Ruminiclostridium cellulolyticum (strain ATCC 35319 / DSM 5812 / JCM 6584 / H10) (Clostridium cellulolyticum), this protein is Translational regulator CsrA.